The sequence spans 982 residues: Hunchback-like protein (982 aa).

The tract at residues 87–194 is disordered; the sequence is QPGEKIHPDG…SNYQVTSEPV (108 aa). Residues 101–110 show a composition bias toward basic and acidic residues; sequence PKEDGRKSSE. Residues 111–132 are compositionally biased toward polar residues; that stretch reads HTNSYDVSASQSPSNDGAQSDS. Positions 142–152 are enriched in acidic residues; the sequence is CMTETEMDTDE. Positions 153-175 are enriched in basic and acidic residues; that stretch reads KDSTIKPEDQATPKLEEGSDSKP. Over residues 176 to 193 the composition is skewed to polar residues; sequence ESTSVEGTSSNYQVTSEP. 7 C2H2-type zinc fingers span residues 336 to 358, 361 to 384, 538 to 560, 567 to 589, 595 to 617, 623 to 647, and 734 to 756; these read LVCPICGFMCPSKFHFNSHMNTH, HQCSMCDYTSRTEGRLKKHMRESH, FKCKQCGHQSLSKDDQWAHARTH, LNCQHCNFVTEYKHHLEYHYRNH, FQCKKCAYNCVNKSMLNSHMKSH, FRCMDCTYATKYCHSLKLHLKKYNH, and LKCSACDFVASSADEKMRHSMSH. The segment at 377-415 is disordered; the sequence is KKHMRESHTVEEQLRAGFESEPAKESASSPKNLSLSKDG. The tract at residues 811 to 896 is disordered; sequence EEMDQGSDSA…PPLHSSSIVA (86 aa). Polar residues-rich tracts occupy residues 816–831 and 843–862; these read GSDSAVSPTGSSQISS and SLEQISARANGNNSPMSNDS. Residues 863–875 show a composition bias toward basic and acidic residues; it reads AMEKDGESADDAP. C2H2-type zinc fingers lie at residues 929-951 and 957-981; these read FYCDHCKIPFDTQQVLDSHMRFH and FMCSDCQYQAFNELSFALHMYQARH.

The protein belongs to the hunchback C2H2-type zinc-finger protein family. As to expression, expressed primarily in ectodermal cells during embryonic and larval development.

Its subcellular location is the nucleus. Required for the late stages of development. Plays a role in the developmental timing of postembryonic hypodermal seam cell fusion events and adult alae production. This chain is Hunchback-like protein, found in Caenorhabditis elegans.